The sequence spans 199 residues: Dephospho-CoA kinase (199 aa).

The DPCK domain occupies 3-199 (VLGLTGSIGM…AAARMPRRRP (197 aa)). 11 to 16 (GMGKST) serves as a coordination point for ATP.

This sequence belongs to the CoaE family.

It is found in the cytoplasm. It catalyses the reaction 3'-dephospho-CoA + ATP = ADP + CoA + H(+). The protein operates within cofactor biosynthesis; coenzyme A biosynthesis; CoA from (R)-pantothenate: step 5/5. Functionally, catalyzes the phosphorylation of the 3'-hydroxyl group of dephosphocoenzyme A to form coenzyme A. This Rhodopseudomonas palustris (strain HaA2) protein is Dephospho-CoA kinase.